The chain runs to 975 residues: Translation initiation factor IF-2 (975 aa).

Positions 48–63 are enriched in basic and acidic residues; that stretch reads DHLRKSHGATDGDKRK. 2 disordered regions span residues 48-84 and 96-388; these read DHLR…GKAR and FVKR…QAPT. Low complexity predominate over residues 104-115; that stretch reads ETGADQAQAQTD. The segment covering 120-177 has biased composition (basic and acidic residues); sequence AELKRREEEARREAELLEKQAQELRERQERLEREEAERRAREEAAEAERRRAEEEAAA. Residues 178 to 211 show a composition bias toward low complexity; sequence KRAAAAQAEAAQQAAAAREQAQRAQSEPAEQSAQ. A compositionally biased stretch (basic and acidic residues) spans 212–263; the sequence is DEARAAAERAAQREAAKKAEDAAREAADKARAEQEEIRKRREAAEAEARAIR. The segment covering 302 to 330 has biased composition (low complexity); that stretch reads KPAGEAAAARPAAKKPASGAPAPAAAPAG. Residues 359 to 372 are compositionally biased toward gly residues; sequence SSGGVDRGWRGGPK. Positions 475-644 constitute a tr-type G domain; the sequence is PRPPVVTVMG…LLQAEVLELK (170 aa). The tract at residues 484–491 is G1; that stretch reads GHVDHGKT. 484–491 provides a ligand contact to GTP; it reads GHVDHGKT. Residues 509–513 form a G2 region; it reads GITQH. Residues 530 to 533 are G3; sequence DTPG. GTP contacts are provided by residues 530-534 and 584-587; these read DTPGH and NKID. Residues 584–587 are G4; that stretch reads NKID. The tract at residues 620–622 is G5; that stretch reads SAK.

Belongs to the TRAFAC class translation factor GTPase superfamily. Classic translation factor GTPase family. IF-2 subfamily.

Its subcellular location is the cytoplasm. Its function is as follows. One of the essential components for the initiation of protein synthesis. Protects formylmethionyl-tRNA from spontaneous hydrolysis and promotes its binding to the 30S ribosomal subunits. Also involved in the hydrolysis of GTP during the formation of the 70S ribosomal complex. This is Translation initiation factor IF-2 from Burkholderia pseudomallei (strain 1710b).